Reading from the N-terminus, the 320-residue chain is Lipoyl synthase (320 aa).

[4Fe-4S] cluster contacts are provided by cysteine 67, cysteine 72, cysteine 78, cysteine 93, cysteine 97, cysteine 100, and serine 307. The Radical SAM core domain maps to 79 to 296; it reads FNHGTATFMI…RDKANEMGFE (218 aa).

It belongs to the radical SAM superfamily. Lipoyl synthase family. [4Fe-4S] cluster is required as a cofactor.

Its subcellular location is the cytoplasm. It catalyses the reaction [[Fe-S] cluster scaffold protein carrying a second [4Fe-4S](2+) cluster] + N(6)-octanoyl-L-lysyl-[protein] + 2 oxidized [2Fe-2S]-[ferredoxin] + 2 S-adenosyl-L-methionine + 4 H(+) = [[Fe-S] cluster scaffold protein] + N(6)-[(R)-dihydrolipoyl]-L-lysyl-[protein] + 4 Fe(3+) + 2 hydrogen sulfide + 2 5'-deoxyadenosine + 2 L-methionine + 2 reduced [2Fe-2S]-[ferredoxin]. Its pathway is protein modification; protein lipoylation via endogenous pathway; protein N(6)-(lipoyl)lysine from octanoyl-[acyl-carrier-protein]: step 2/2. Its function is as follows. Catalyzes the radical-mediated insertion of two sulfur atoms into the C-6 and C-8 positions of the octanoyl moiety bound to the lipoyl domains of lipoate-dependent enzymes, thereby converting the octanoylated domains into lipoylated derivatives. The polypeptide is Lipoyl synthase (Haemophilus influenzae (strain ATCC 51907 / DSM 11121 / KW20 / Rd)).